We begin with the raw amino-acid sequence, 219 residues long: NAD(P)H-quinone oxidoreductase subunit I (219 aa).

4Fe-4S ferredoxin-type domains are found at residues 55-84 (GRIHYEFDKCIACEVCVRVCPINLPVVDWV) and 95-124 (RNYSIDFGVCIFCGNCVEYCPTNCLSMTEE). [4Fe-4S] cluster-binding residues include C64, C67, C70, C74, C104, C107, C110, and C114.

Belongs to the complex I 23 kDa subunit family. NDH-1 is composed of at least 11 different subunits. Requires [4Fe-4S] cluster as cofactor.

Its subcellular location is the cellular thylakoid membrane. The catalysed reaction is a plastoquinone + NADH + (n+1) H(+)(in) = a plastoquinol + NAD(+) + n H(+)(out). It carries out the reaction a plastoquinone + NADPH + (n+1) H(+)(in) = a plastoquinol + NADP(+) + n H(+)(out). NDH-1 shuttles electrons from an unknown electron donor, via FMN and iron-sulfur (Fe-S) centers, to quinones in the respiratory and/or the photosynthetic chain. The immediate electron acceptor for the enzyme in this species is believed to be plastoquinone. Couples the redox reaction to proton translocation, and thus conserves the redox energy in a proton gradient. The sequence is that of NAD(P)H-quinone oxidoreductase subunit I from Prochlorococcus marinus (strain SARG / CCMP1375 / SS120).